Consider the following 205-residue polypeptide: Calcium-binding allergen Bet v 3 (205 aa).

The tract at residues 1–26 is disordered; the sequence is MPCSTEAMEKAGHGHASTPRKRSLSN. 4 consecutive EF-hand domains span residues 36–71, 72–107, 130–165, and 168–203; these read LNTL…LGLE, TDLS…LNDS, QEEA…LGFS, and SEID…VLVR. Positions 49, 51, 53, and 60 each coordinate Ca(2+). Ca(2+) is bound by residues D143, D145, D147, Y149, E154, D181, N183, D185, R187, and E192.

Functionally, could be involved in calcium metabolism in pollen. Binds 3 calcium ions. The polypeptide is Calcium-binding allergen Bet v 3 (BETVIII) (Betula pendula (European white birch)).